The primary structure comprises 241 residues: CRISPR-associated endoribonuclease Cas6 2 (241 aa).

Residue tyrosine 28 is the Proton acceptor of the active site. Histidine 40 serves as the catalytic Proton donor.

The protein belongs to the CRISPR-associated protein Cas6/Cse3/CasE family.

In terms of biological role, CRISPR (clustered regularly interspaced short palindromic repeat) is an adaptive immune system that provides protection against mobile genetic elements (viruses, transposable elements and conjugative plasmids). CRISPR clusters contain sequences complementary to antecedent mobile elements and target invading nucleic acids. CRISPR clusters are transcribed and processed into CRISPR RNA (crRNA). This protein processes pre-crRNA into individual crRNA units. The protein is CRISPR-associated endoribonuclease Cas6 2 (cas6b) of Methanocaldococcus jannaschii (strain ATCC 43067 / DSM 2661 / JAL-1 / JCM 10045 / NBRC 100440) (Methanococcus jannaschii).